The primary structure comprises 708 residues: Exocyst complex component 5 (708 aa).

The residue at position 2 (alanine 2) is an N-acetylalanine. A coiled-coil region spans residues 40-101; that stretch reads KRLLEEFVNH…AFQHFQELDE (62 aa). 3 positions are modified to phosphothreonine: threonine 122, threonine 395, and threonine 405. Serine 412 bears the Phosphoserine mark.

Belongs to the SEC10 family. As to quaternary structure, the exocyst complex is composed of EXOC1, EXOC2, EXOC3, EXOC4, EXOC5, EXOC6, EXOC7 and EXOC8. Interacts with EXOC3L1. Ubiquitous.

It is found in the cytoplasm. It localises to the midbody. Functionally, component of the exocyst complex involved in the docking of exocytic vesicles with fusion sites on the plasma membrane. This chain is Exocyst complex component 5 (Exoc5), found in Rattus norvegicus (Rat).